Reading from the N-terminus, the 505-residue chain is Probable cytosol aminopeptidase (505 aa).

Mn(2+) contacts are provided by K269 and D274. K281 is an active-site residue. Residues D292, D351, and E353 each contribute to the Mn(2+) site. R355 is a catalytic residue.

This sequence belongs to the peptidase M17 family. The cofactor is Mn(2+).

The protein localises to the cytoplasm. The catalysed reaction is Release of an N-terminal amino acid, Xaa-|-Yaa-, in which Xaa is preferably Leu, but may be other amino acids including Pro although not Arg or Lys, and Yaa may be Pro. Amino acid amides and methyl esters are also readily hydrolyzed, but rates on arylamides are exceedingly low.. The enzyme catalyses Release of an N-terminal amino acid, preferentially leucine, but not glutamic or aspartic acids.. In terms of biological role, presumably involved in the processing and regular turnover of intracellular proteins. Catalyzes the removal of unsubstituted N-terminal amino acids from various peptides. The sequence is that of Probable cytosol aminopeptidase from Rhodococcus erythropolis (strain PR4 / NBRC 100887).